The primary structure comprises 189 residues: MSAVMIAVVLLGLLALVFGAILGFAAVKFRVEGDPLVDQVESLLPQTQCGQCGYPGCRPYAEAIAGGDQINKCPPGGTATMEKIAELMGVEPQPLSATTEQQVKKVAYIREDECIGCTKCIQACPVDAIVGAGKLMHTVITQDCTGCDLCVEPCPVDCIDMLPVTQDIKTWNWKLSAIPVMQLEEDKQC.

The tract at residues 1-26 (MSAVMIAVVLLGLLALVFGAILGFAA) is hydrophobic. In terms of domain architecture, 4Fe-4S spans 32 to 90 (EGDPLVDQVESLLPQTQCGQCGYPGCRPYAEAIAGGDQINKCPPGGTATMEKIAELMGV). [4Fe-4S] cluster contacts are provided by Cys49, Cys52, Cys57, Cys73, Cys114, Cys117, Cys120, Cys124, Cys144, Cys147, Cys150, and Cys154. 4Fe-4S ferredoxin-type domains lie at 105–134 (KVAY…GAGK) and 136–164 (MHTV…MLPV).

The protein belongs to the 4Fe4S bacterial-type ferredoxin family. RnfB subfamily. The complex is composed of six subunits: RnfA, RnfB, RnfC, RnfD, RnfE and RnfG. The cofactor is [4Fe-4S] cluster.

It localises to the cell inner membrane. Functionally, part of a membrane-bound complex that couples electron transfer with translocation of ions across the membrane. The chain is Ion-translocating oxidoreductase complex subunit B from Shewanella amazonensis (strain ATCC BAA-1098 / SB2B).